A 738-amino-acid polypeptide reads, in one-letter code: Probable trehalase (738 aa).

A disordered region spans residues 1-44; it reads MLQGMPKRSGSISELHDPFSSPDVYYGPATDPRRQKQPNKYSRT. Residues arginine 289, 296–297, asparagine 333, arginine 342, 342–344, and glycine 463 each bind substrate; these read WD and RSQ. Residues aspartate 465 and glutamate 660 each act as proton donor/acceptor in the active site.

This sequence belongs to the glycosyl hydrolase 37 family.

It catalyses the reaction alpha,alpha-trehalose + H2O = alpha-D-glucose + beta-D-glucose. In Eremothecium gossypii (strain ATCC 10895 / CBS 109.51 / FGSC 9923 / NRRL Y-1056) (Yeast), this protein is Probable trehalase (NTH2).